The following is a 410-amino-acid chain: DNA replication and repair protein RecF (410 aa).

ATP is bound at residue 30–37 (GPNGHGKT).

Belongs to the RecF family.

Its subcellular location is the cytoplasm. In terms of biological role, the RecF protein is involved in DNA metabolism; it is required for DNA replication and normal SOS inducibility. RecF binds preferentially to single-stranded, linear DNA. It also seems to bind ATP. The protein is DNA replication and repair protein RecF of Rhodococcus opacus (strain B4).